Here is a 62-residue protein sequence, read N- to C-terminus: Potassium channel toxin kappa-KTx 1.4 (62 aa).

The first 26 residues, 1–26 (MKSCLINVSLLILLLLPILGYASVNA), serve as a signal peptide directing secretion. A propeptide spanning residues 27-38 (ESIDGENDFEEE) is cleaved from the precursor. Disulfide bonds link Cys43/Cys61 and Cys47/Cys57.

Belongs to the short scorpion toxin superfamily. Potassium channel inhibitor kappa-KTx family. Kappa-KTx 1 subfamily. In terms of tissue distribution, expressed by the venom gland.

The protein resides in the secreted. Its function is as follows. Shows structural homology with WaTx suggesting that it acts as a cell-penetrating peptide (CPP) with defensive purpose that induces pain by specifically activating mammalian sensory neuron TRPA1 channels. Has no effect on the voltage-gated potassium channels tested. The protein is Potassium channel toxin kappa-KTx 1.4 of Heterometrus petersii (Asian forest scorpion).